We begin with the raw amino-acid sequence, 285 residues long: MNPSYKGKVRDIYDLGDKLILSSSDRISAFDVVFPQLVPDKGKVLNRISVSWFEFFKDVPNHILETDVKYFPIPFQNHPDLEGRSVLVKKCKRIDYECVVRGYISGSGWKEYKNDGTLAGIKLPSGFKESQKLPEPVFTPAVKNDQGHDENISEKEMENRIGKELFNILKEKSISIFLRASEVVDKAGIILCDTKFEFGILDGQVILIDELLTPDSSRYWSTDTYSVGISPPSLDKQILRNYLETTSWNKMPPAPNLPAELIQELREKYQKIEDLILSCTSQKSK.

It belongs to the SAICAR synthetase family.

The enzyme catalyses 5-amino-1-(5-phospho-D-ribosyl)imidazole-4-carboxylate + L-aspartate + ATP = (2S)-2-[5-amino-1-(5-phospho-beta-D-ribosyl)imidazole-4-carboxamido]succinate + ADP + phosphate + 2 H(+). The protein operates within purine metabolism; IMP biosynthesis via de novo pathway; 5-amino-1-(5-phospho-D-ribosyl)imidazole-4-carboxamide from 5-amino-1-(5-phospho-D-ribosyl)imidazole-4-carboxylate: step 1/2. This Leptospira interrogans serogroup Icterohaemorrhagiae serovar copenhageni (strain Fiocruz L1-130) protein is Phosphoribosylaminoimidazole-succinocarboxamide synthase.